The sequence spans 384 residues: 2-deoxy-scyllo-inosose synthase (384 aa).

NAD(+) contacts are provided by residues D42, 73 to 76 (EVHK), 105 to 109 (GITGN), 129 to 130 (TT), 140 to 142 (SLK), and 151 to 152 (KN). K142 is an active-site residue. A Co(2+)-binding site is contributed by E184. E244 is a catalytic residue. Co(2+) is bound by residues H247 and H263.

This sequence belongs to the sugar phosphate cyclases superfamily. DOI synthase family. Requires NAD(+) as cofactor. Co(2+) is required as a cofactor.

The enzyme catalyses D-glucose 6-phosphate = 2-deoxy-L-scyllo-inosose + phosphate. Its pathway is metabolic intermediate biosynthesis; 2-deoxystreptamine biosynthesis; 2-deoxystreptamine from D-glucose 6-phosphate: step 1/4. It participates in antibiotic biosynthesis; lividomycin biosynthesis. Catalyzes the intramolecular carbocycle formation from D-glucose-6-phosphate to 2-deoxy-scyllo-inosose (DOI). The polypeptide is 2-deoxy-scyllo-inosose synthase (livC) (Streptomyces lividus).